We begin with the raw amino-acid sequence, 338 residues long: Aspartate-semialdehyde dehydrogenase (338 aa).

Residues 13 to 16 (TGNV) and 41 to 42 (SS) each bind NADP(+). Arg101 lines the phosphate pocket. The Acyl-thioester intermediate role is filled by Cys132. Substrate is bound at residue Gln159. NADP(+)-binding positions include 162–163 (SG) and Pro187. Lys216 is a phosphate binding site. A substrate-binding site is contributed by Arg237. Residue His244 is the Proton acceptor of the active site. Asn317 is an NADP(+) binding site.

It belongs to the aspartate-semialdehyde dehydrogenase family. In terms of assembly, homodimer.

It catalyses the reaction L-aspartate 4-semialdehyde + phosphate + NADP(+) = 4-phospho-L-aspartate + NADPH + H(+). The protein operates within amino-acid biosynthesis; L-lysine biosynthesis via DAP pathway; (S)-tetrahydrodipicolinate from L-aspartate: step 2/4. It participates in amino-acid biosynthesis; L-methionine biosynthesis via de novo pathway; L-homoserine from L-aspartate: step 2/3. It functions in the pathway amino-acid biosynthesis; L-threonine biosynthesis; L-threonine from L-aspartate: step 2/5. Functionally, catalyzes the NADPH-dependent formation of L-aspartate-semialdehyde (L-ASA) by the reductive dephosphorylation of L-aspartyl-4-phosphate. The sequence is that of Aspartate-semialdehyde dehydrogenase from Rickettsia conorii (strain ATCC VR-613 / Malish 7).